Consider the following 248-residue polypeptide: Meiotically up-regulated gene 65 protein (248 aa).

In terms of biological role, has a role in meiosis. This Schizosaccharomyces pombe (strain 972 / ATCC 24843) (Fission yeast) protein is Meiotically up-regulated gene 65 protein (mug65).